The primary structure comprises 138 residues: Phospholipase A2 homolog mojave toxin acidic chain (138 aa).

Positions 1–40 (MRALWIVAVLLVGVEGSLVEFETLIMKIAGRSGISYYSSY) are cleaved as a signal peptide. 7 disulfide bridges follow: Cys42–Cys131, Cys44–Cys60, Cys59–Cys111, Cys65–Cys138, Cys66–Cys104, Cys73–Cys97, and Cys91–Cys102. Residues 81 to 83 (TYR) constitute a propeptide that is removed on maturation. Pyrrolidone carboxylic acid is present on Gln84. Residues 120 to 126 (DYKYLRF) constitute a propeptide that is removed on maturation.

It belongs to the phospholipase A2 family. Group II subfamily. D49 sub-subfamily. Heterodimer of an acidic and a basic chain. The acidic subunit is non-toxic, without enzymatic activity and comprises 3 peptides that are cross-linked by 5 disulfide bridges. The basic subunit is toxic, has phospholipase A2 activity and is composed of a single chain. Ca(2+) is required as a cofactor. As to expression, expressed by the venom gland.

The protein resides in the secreted. Functionally, snake venom phospholipase A2 (PLA2) that inhibits neuromuscular transmission by blocking acetylcholine release from the nerve termini. This is Phospholipase A2 homolog mojave toxin acidic chain from Crotalus scutulatus scutulatus (Mojave rattlesnake).